A 412-amino-acid chain; its full sequence is Putative competence-damage inducible protein (412 aa).

This sequence belongs to the CinA family.

The protein is Putative competence-damage inducible protein of Bacillus cereus (strain ZK / E33L).